The chain runs to 506 residues: Histidine ammonia-lyase (506 aa).

A cross-link (5-imidazolinone (Ala-Gly)) is located at residues 144 to 146; the sequence is ASG. Serine 145 carries the 2,3-didehydroalanine (Ser) modification.

This sequence belongs to the PAL/histidase family. Post-translationally, contains an active site 4-methylidene-imidazol-5-one (MIO), which is formed autocatalytically by cyclization and dehydration of residues Ala-Ser-Gly.

The protein resides in the cytoplasm. The enzyme catalyses L-histidine = trans-urocanate + NH4(+). Its pathway is amino-acid degradation; L-histidine degradation into L-glutamate; N-formimidoyl-L-glutamate from L-histidine: step 1/3. This Legionella pneumophila (strain Lens) protein is Histidine ammonia-lyase.